A 71-amino-acid polypeptide reads, in one-letter code: MKHKRMMLPHYVRVYVCVRTDGENEKAGQSEEYDDDDKEENKKRRRNNGRRGPPEKKKSRRGGEEQTQRII.

The tract at residues 23–71 is disordered; the sequence is ENEKAGQSEEYDDDDKEENKKRRRNNGRRGPPEKKKSRRGGEEQTQRII. Residues 52-71 show a composition bias toward basic and acidic residues; that stretch reads GPPEKKKSRRGGEEQTQRII.

This is an uncharacterized protein from Caenorhabditis elegans.